The sequence spans 1059 residues: Carbamoyl phosphate synthase large chain (1059 aa).

Residues 1 to 401 (MPKRSDIKKI…SLLKACRSLE (401 aa)) are carboxyphosphate synthetic domain. Residues arginine 129, arginine 169, glycine 175, glycine 176, arginine 208, isoleucine 210, glutamate 215, glycine 241, isoleucine 242, histidine 243, glutamine 284, and glutamate 298 each contribute to the ATP site. In terms of domain architecture, ATP-grasp 1 spans 133–327 (KQLMEELEQP…IAKLAAKIAV (195 aa)). The Mg(2+) site is built by glutamine 284, glutamate 298, and asparagine 300. 3 residues coordinate Mn(2+): glutamine 284, glutamate 298, and asparagine 300. The interval 402-546 (IGVYHNEMSE…YSTYEWENES (145 aa)) is oligomerization domain. Positions 547 to 929 (IKSDKESVIV…ALYKAFEASY (383 aa)) are carbamoyl phosphate synthetic domain. Residues 671–861 (EQALKDLDIP…MAQVATNLIL (191 aa)) enclose the ATP-grasp 2 domain. ATP-binding residues include arginine 707, serine 746, isoleucine 748, glutamate 752, glycine 777, valine 778, histidine 779, serine 780, glutamine 820, and glutamate 832. 3 residues coordinate Mg(2+): glutamine 820, glutamate 832, and asparagine 834. Mn(2+) contacts are provided by glutamine 820, glutamate 832, and asparagine 834. An MGS-like domain is found at 930 to 1059 (LHLPTFGNVI…ESRSFTTEAI (130 aa)). Residues 930 to 1059 (LHLPTFGNVI…ESRSFTTEAI (130 aa)) are allosteric domain.

It belongs to the CarB family. Composed of two chains; the small (or glutamine) chain promotes the hydrolysis of glutamine to ammonia, which is used by the large (or ammonia) chain to synthesize carbamoyl phosphate. Tetramer of heterodimers (alpha,beta)4. Mg(2+) is required as a cofactor. Mn(2+) serves as cofactor.

It catalyses the reaction hydrogencarbonate + L-glutamine + 2 ATP + H2O = carbamoyl phosphate + L-glutamate + 2 ADP + phosphate + 2 H(+). It carries out the reaction hydrogencarbonate + NH4(+) + 2 ATP = carbamoyl phosphate + 2 ADP + phosphate + 2 H(+). The protein operates within amino-acid biosynthesis; L-arginine biosynthesis; carbamoyl phosphate from bicarbonate: step 1/1. It participates in pyrimidine metabolism; UMP biosynthesis via de novo pathway; (S)-dihydroorotate from bicarbonate: step 1/3. Large subunit of the glutamine-dependent carbamoyl phosphate synthetase (CPSase). CPSase catalyzes the formation of carbamoyl phosphate from the ammonia moiety of glutamine, carbonate, and phosphate donated by ATP, constituting the first step of 2 biosynthetic pathways, one leading to arginine and/or urea and the other to pyrimidine nucleotides. The large subunit (synthetase) binds the substrates ammonia (free or transferred from glutamine from the small subunit), hydrogencarbonate and ATP and carries out an ATP-coupled ligase reaction, activating hydrogencarbonate by forming carboxy phosphate which reacts with ammonia to form carbamoyl phosphate. The protein is Carbamoyl phosphate synthase large chain of Streptococcus thermophilus (strain ATCC BAA-250 / LMG 18311).